Here is a 276-residue protein sequence, read N- to C-terminus: F420-dependent methylenetetrahydromethanopterin dehydrogenase (276 aa).

This sequence belongs to the MTD family.

It catalyses the reaction 5,10-methylenetetrahydromethanopterin + oxidized coenzyme F420-(gamma-L-Glu)(n) + 2 H(+) = 5,10-methenyl-5,6,7,8-tetrahydromethanopterin + reduced coenzyme F420-(gamma-L-Glu)(n). It participates in one-carbon metabolism; methanogenesis from CO(2); 5,10-methylene-5,6,7,8-tetrahydromethanopterin from 5,10-methenyl-5,6,7,8-tetrahydromethanopterin (coenzyme F420 route): step 1/1. In terms of biological role, catalyzes the reversible reduction of methenyl-H(4)MPT(+) to methylene-H(4)MPT. This is F420-dependent methylenetetrahydromethanopterin dehydrogenase from Methanococcus vannielii (strain ATCC 35089 / DSM 1224 / JCM 13029 / OCM 148 / SB).